Reading from the N-terminus, the 155-residue chain is UPF0266 membrane protein LMHCC_1856 (155 aa).

The next 3 membrane-spanning stretches (helical) occupy residues 8 to 28 (IFLF…DAVI), 46 to 66 (RWDG…NTFF), and 70 to 90 (PFST…ICFF).

The protein belongs to the UPF0266 family.

It localises to the cell membrane. The chain is UPF0266 membrane protein LMHCC_1856 from Listeria monocytogenes serotype 4a (strain HCC23).